We begin with the raw amino-acid sequence, 439 residues long: MAASVSTVGAVNRAILNLNGSGAGASAPTSAFFGTSLKKAVASRVPNSKVTNGSFKIVAAEKEIEESQQTNKDRWKGLAYDISDDQQDITRGKGMVDPLFQAPMDAGTHYAVMSSYEYLSTGLRQLDNIKDGFYIAPAFLDKLVVHITKNFMTLPNIKVPLILGIWGGKGQGKSFQCELVFAKMGINPIMMSAGELESGNAGEPAKLIRQRYREAADLIAKGKMCALFINDLDAGAGRLGGTTQYTVNNQMVNATLMNIADNPTNVQLPGMYNKEENARVPIIVTGNDFSTLYAPLIRDGRMEKFYWAPTRDDRVGVCKGIFRTDGVPEEDITKLVDTFPGQSIDFFGALRARVYDDEVRKWISGVGVDATGKKLVNSKEGPPTFDQPKMSLDKLLQYGNMLVQEQENVKRVQLADKYLNEAALGNANEDAIKSGSFFK.

167-174 contacts ATP; the sequence is GGKGQGKS.

This sequence belongs to the RuBisCO activase family.

The protein localises to the plastid. It localises to the chloroplast stroma. Its function is as follows. Activation of RuBisCO (ribulose-1,5-bisphosphate carboxylase/oxygenase; EC 4.1.1.39) involves the ATP-dependent carboxylation of the epsilon-amino group of lysine leading to a carbamate structure. The polypeptide is Ribulose bisphosphate carboxylase/oxygenase activase, chloroplastic (RCA) (Vigna radiata var. radiata (Mung bean)).